A 452-amino-acid chain; its full sequence is UDP-N-acetylmuramoylalanine--D-glutamate ligase (452 aa).

119–125 (GSNGKTT) is an ATP binding site.

This sequence belongs to the MurCDEF family.

The protein resides in the cytoplasm. It catalyses the reaction UDP-N-acetyl-alpha-D-muramoyl-L-alanine + D-glutamate + ATP = UDP-N-acetyl-alpha-D-muramoyl-L-alanyl-D-glutamate + ADP + phosphate + H(+). The protein operates within cell wall biogenesis; peptidoglycan biosynthesis. In terms of biological role, cell wall formation. Catalyzes the addition of glutamate to the nucleotide precursor UDP-N-acetylmuramoyl-L-alanine (UMA). In Streptococcus pyogenes serotype M2 (strain MGAS10270), this protein is UDP-N-acetylmuramoylalanine--D-glutamate ligase.